Here is a 572-residue protein sequence, read N- to C-terminus: Dityrosine transporter 1 (572 aa).

Disordered regions lie at residues 1-28 and 49-95; these read MGSE…STFH and RANI…SPDT. Topologically, residues 1 to 110 are cytoplasmic; the sequence is MGSEPFQKKN…YTYFSKDQRL (110 aa). Residues 13–28 are compositionally biased toward polar residues; it reads LQINSQESGTTRSTFH. Over residues 50–62 the composition is skewed to basic and acidic residues; the sequence is ANIDHDVFHEHPD. Residues 83-95 show a composition bias toward polar residues; sequence SSNSQSRDPSPDT. A helical membrane pass occupies residues 111 to 131; that stretch reads IIFGIIIFIGFLGPMSGNIYI. Residues 132–149 are Extracellular-facing; that stretch reads PALPLLQREYDVSATTIN. The helical transmembrane segment at 150 to 170 threads the bilayer; that stretch reads ATVSVFMAVFSVGPLFWGALA. Residues 171–184 are Cytoplasmic-facing; the sequence is DFGGRKFLYMVSLS. A helical membrane pass occupies residues 185–205; the sequence is LMLIVNILLAAVPVNIAALFV. Topologically, residues 206–207 are extracellular; sequence LR. The chain crosses the membrane as a helical span at residues 208–228; it reads IFQAFASSSVISLGAGTVTDV. Topologically, residues 229-240 are cytoplasmic; it reads VPPKHRGKAIAY. A helical membrane pass occupies residues 241-261; sequence FMMGPNMGPIIAPIVAGLILM. Topologically, residues 262–267 are extracellular; that stretch reads KGNYWR. A helical membrane pass occupies residues 268–288; the sequence is WLFGFTSIMTGIALILVTALL. The Cytoplasmic portion of the chain corresponds to 289 to 366; sequence PETLRCIVGN…TLYWKMIKCP (78 aa). Residues 367-387 traverse the membrane as a helical segment; the sequence is PIIITSVSTALLFSSYYAFSV. At 388 to 398 the chain is on the extracellular side; sequence TFSYYLEHDYR. A helical membrane pass occupies residues 399 to 419; that stretch reads FTMLEIGAAYVCPGVAMLLGS. Residues 420–446 lie on the Cytoplasmic side of the membrane; that stretch reads QSGGHLSDYLRSRWIKSHPKKKFPAEF. Residues 447 to 469 form a helical membrane-spanning segment; sequence RLLLNLIGILLTICGTIGYGWAI. Topologically, residues 470–472 are extracellular; the sequence is FFH. The helical transmembrane segment at 473 to 493 threads the bilayer; that stretch reads YHFVVLLVFSALTAFGMTWCS. Topologically, residues 494–520 are cytoplasmic; sequence NTSMTYLTELFPKRAAGTVAVSSFFRN. A helical transmembrane segment spans residues 521-541; it reads VGAAISSAIILQLCNAMGIGW. Position 542 (cysteine 542) is a topological domain, extracellular. The chain crosses the membrane as a helical span at residues 543 to 563; sequence FTGLGLCSSISLIGILYLLIF. The interval 548–572 is required for the localization to the prospore membrane; the sequence is LCSSISLIGILYLLIFQRKYTAKEF. The Cytoplasmic portion of the chain corresponds to 564–572; the sequence is QRKYTAKEF.

This sequence belongs to the major facilitator superfamily. CAR1 family. Post-translationally, phosphorylated.

The protein localises to the prospore membrane. Functionally, prospore-specific dityrosine transporter responsible for translocation of dityrosine through the prospore membrane and required for the formation of the outermost layer of the spore. This Saccharomyces cerevisiae (strain ATCC 204508 / S288c) (Baker's yeast) protein is Dityrosine transporter 1 (DTR1).